The sequence spans 341 residues: Serine/threonine-protein kinase PDIK1L (341 aa).

The Protein kinase domain maps to tyrosine 8–phenylalanine 334. ATP contacts are provided by residues valine 14–valine 22 and lysine 37. Aspartate 164 (proton acceptor) is an active-site residue.

It belongs to the protein kinase superfamily. Ser/Thr protein kinase family.

The protein localises to the nucleus. It carries out the reaction L-seryl-[protein] + ATP = O-phospho-L-seryl-[protein] + ADP + H(+). It catalyses the reaction L-threonyl-[protein] + ATP = O-phospho-L-threonyl-[protein] + ADP + H(+). This is Serine/threonine-protein kinase PDIK1L (Pdik1l) from Mus musculus (Mouse).